A 476-amino-acid chain; its full sequence is 3-isopropylmalate dehydratase large subunit (476 aa).

[4Fe-4S] cluster contacts are provided by cysteine 357, cysteine 417, and cysteine 420.

It belongs to the aconitase/IPM isomerase family. LeuC type 1 subfamily. Heterodimer of LeuC and LeuD. Requires [4Fe-4S] cluster as cofactor.

The enzyme catalyses (2R,3S)-3-isopropylmalate = (2S)-2-isopropylmalate. Its pathway is amino-acid biosynthesis; L-leucine biosynthesis; L-leucine from 3-methyl-2-oxobutanoate: step 2/4. Its function is as follows. Catalyzes the isomerization between 2-isopropylmalate and 3-isopropylmalate, via the formation of 2-isopropylmaleate. This Mycobacterium avium (strain 104) protein is 3-isopropylmalate dehydratase large subunit.